We begin with the raw amino-acid sequence, 229 residues long: Response regulator SaeR (229 aa).

Positions 3-116 constitute a Response regulatory domain; it reads HLLIVDDEKD…ELVLRTNNLL (114 aa). Residue Asp-51 is modified to 4-aspartylphosphate. A DNA-binding region (ompR/PhoB-type) is located at residues 128-227; that stretch reads IEQLEFDGLV…VWGLGYKFER (100 aa).

In terms of processing, phosphorylated by SaeS.

The protein localises to the cytoplasm. Its function is as follows. Member of the two-component regulatory system SaeR/SaeS. Probably functions as a transcriptional regulator via a specific DNA-binding domain, recognizing motifs near the promoter sequences of target genes. The polypeptide is Response regulator SaeR (saeR) (Staphylococcus epidermidis (strain ATCC 35984 / DSM 28319 / BCRC 17069 / CCUG 31568 / BM 3577 / RP62A)).